A 272-amino-acid polypeptide reads, in one-letter code: MISNPSLLSYTCIAKGTVVLAEFVSRQEPGIEAIALRCIENTPPHHSMFSHTVHKKTYTFAIDDDSFVYFSISDESMEKPESFWVLNRLRSAIEDLIKDGGSDVETLINPVSHCLQLKLDPVFAEIVGVVDLELLDMDLVGSPRSVARESRNPSIDSSKGRRAALMPLLGKPLKALKKKKRLHNEAKGGDSCEVGSIQEISEKNVDLCGNGNNGVLRKELRNGLLSDHHHRQKAKQIWKKHVWVVLMFDFCICAVLFGIWLWICEGFQCIQG.

The 105-residue stretch at 12 to 116 (CIAKGTVVLA…LINPVSHCLQ (105 aa)) folds into the Longin domain. The chain crosses the membrane as a helical; Anchor for type IV membrane protein span at residues 243 to 263 (WVVLMFDFCICAVLFGIWLWI).

The protein belongs to the synaptobrevin family.

It is found in the membrane. Non-SNARE longin protein involved in membrane-trafficking machinery. The protein is Phytolongin Phyl2.2 of Arabidopsis thaliana (Mouse-ear cress).